Here is a 156-residue protein sequence, read N- to C-terminus: MSKITEVVESIALPIVERENMELVDVEFVKEGPDWFLRVYIDKPGGVDLDDCVNINEQLSEKLNETDPIEQAYYLDVSSPGAERPLKKPSDFERAVGKNVYMKTFAPIDGAKEFEGILTAYDGETVVIETRIKTRKKAVSLPVDKIAQARLAVTFS.

Belongs to the RimP family.

The protein resides in the cytoplasm. In terms of biological role, required for maturation of 30S ribosomal subunits. This Exiguobacterium sp. (strain ATCC BAA-1283 / AT1b) protein is Ribosome maturation factor RimP.